We begin with the raw amino-acid sequence, 53 residues long: ATP synthase protein 8 (53 aa).

Residues Trp-9–Phe-29 traverse the membrane as a helical segment.

Belongs to the ATPase protein 8 family. F-type ATPases have 2 components, CF(1) - the catalytic core - and CF(0) - the membrane proton channel.

Its subcellular location is the mitochondrion membrane. In terms of biological role, mitochondrial membrane ATP synthase (F(1)F(0) ATP synthase or Complex V) produces ATP from ADP in the presence of a proton gradient across the membrane which is generated by electron transport complexes of the respiratory chain. F-type ATPases consist of two structural domains, F(1) - containing the extramembraneous catalytic core and F(0) - containing the membrane proton channel, linked together by a central stalk and a peripheral stalk. During catalysis, ATP synthesis in the catalytic domain of F(1) is coupled via a rotary mechanism of the central stalk subunits to proton translocation. Part of the complex F(0) domain. Minor subunit located with subunit a in the membrane. The polypeptide is ATP synthase protein 8 (mt:ATPase8) (Anopheles quadrimaculatus (Common malaria mosquito)).